A 433-amino-acid polypeptide reads, in one-letter code: PC-esterase domain-containing protein 1B (433 aa).

A disordered region spans residues Pro-386–Gln-433.

The protein belongs to the PC-esterase family.

The sequence is that of PC-esterase domain-containing protein 1B (Pced1b) from Mus musculus (Mouse).